The sequence spans 112 residues: MQSFVQQLKALSSAEDFLQFFGIPFDQKVVNVSRLHILKRFFQYIRQQDVLPEGDEAALFASYHALLLKAYGDFVISTPAQEKVFKVFQDTAGRQHVSLDSLRASLPARTVA.

This sequence belongs to the NifW family. In terms of assembly, homotrimer; associates with NifD.

Its function is as follows. May protect the nitrogenase Fe-Mo protein from oxidative damage. In Paraburkholderia xenovorans (strain LB400), this protein is Nitrogenase-stabilizing/protective protein NifW.